We begin with the raw amino-acid sequence, 145 residues long: RING-H2 finger protein ATL18 (145 aa).

Residues 1–29 (MISMLFPRSPLCTAAIVFYTCVCIPLGRL) form the signal peptide. The RING-type; atypical zinc-finger motif lies at 62-105 (CPICLVEFEAEDAVTHLPRCAHLFHINCIEPWLLRGHLTCPLCR). Residues 125 to 145 (STLYLSIFFFFCIFLHLLGYL) form a helical membrane-spanning segment.

Belongs to the RING-type zinc finger family. ATL subfamily.

The protein resides in the membrane. The enzyme catalyses S-ubiquitinyl-[E2 ubiquitin-conjugating enzyme]-L-cysteine + [acceptor protein]-L-lysine = [E2 ubiquitin-conjugating enzyme]-L-cysteine + N(6)-ubiquitinyl-[acceptor protein]-L-lysine.. The protein operates within protein modification; protein ubiquitination. The protein is RING-H2 finger protein ATL18 (ATL18) of Arabidopsis thaliana (Mouse-ear cress).